Reading from the N-terminus, the 721-residue chain is Phosphoribosylformylglycinamidine synthase subunit PurL (721 aa).

H47 is a catalytic residue. ATP contacts are provided by Y50 and K89. A Mg(2+)-binding site is contributed by E91. Substrate is bound by residues S92–H95 and R114. Residue H93 is the Proton acceptor of the active site. D115 provides a ligand contact to Mg(2+). Residue Q238 coordinates substrate. D266 contacts Mg(2+). Residue E310–Q312 participates in substrate binding. Residues D490 and G527 each coordinate ATP. Residue N528 coordinates Mg(2+). S530 is a binding site for substrate.

The protein belongs to the FGAMS family. As to quaternary structure, monomer. Part of the FGAM synthase complex composed of 1 PurL, 1 PurQ and 2 PurS subunits.

The protein localises to the cytoplasm. The enzyme catalyses N(2)-formyl-N(1)-(5-phospho-beta-D-ribosyl)glycinamide + L-glutamine + ATP + H2O = 2-formamido-N(1)-(5-O-phospho-beta-D-ribosyl)acetamidine + L-glutamate + ADP + phosphate + H(+). The protein operates within purine metabolism; IMP biosynthesis via de novo pathway; 5-amino-1-(5-phospho-D-ribosyl)imidazole from N(2)-formyl-N(1)-(5-phospho-D-ribosyl)glycinamide: step 1/2. Functionally, part of the phosphoribosylformylglycinamidine synthase complex involved in the purines biosynthetic pathway. Catalyzes the ATP-dependent conversion of formylglycinamide ribonucleotide (FGAR) and glutamine to yield formylglycinamidine ribonucleotide (FGAM) and glutamate. The FGAM synthase complex is composed of three subunits. PurQ produces an ammonia molecule by converting glutamine to glutamate. PurL transfers the ammonia molecule to FGAR to form FGAM in an ATP-dependent manner. PurS interacts with PurQ and PurL and is thought to assist in the transfer of the ammonia molecule from PurQ to PurL. In Ruegeria sp. (strain TM1040) (Silicibacter sp.), this protein is Phosphoribosylformylglycinamidine synthase subunit PurL.